A 419-amino-acid chain; its full sequence is Gamma-glutamyl phosphate reductase (419 aa).

This sequence belongs to the gamma-glutamyl phosphate reductase family.

It is found in the cytoplasm. It carries out the reaction L-glutamate 5-semialdehyde + phosphate + NADP(+) = L-glutamyl 5-phosphate + NADPH + H(+). The protein operates within amino-acid biosynthesis; L-proline biosynthesis; L-glutamate 5-semialdehyde from L-glutamate: step 2/2. Functionally, catalyzes the NADPH-dependent reduction of L-glutamate 5-phosphate into L-glutamate 5-semialdehyde and phosphate. The product spontaneously undergoes cyclization to form 1-pyrroline-5-carboxylate. This Mannheimia succiniciproducens (strain KCTC 0769BP / MBEL55E) protein is Gamma-glutamyl phosphate reductase.